The sequence spans 124 residues: MPRYELALILKAMQRPETAAALKRTLEALMDRGAVVRSLENLGERTLPYKMSAHSQRHTRGGYFLVDFYAPTTTVASIMEHLSRDIDVIRPNVVKHPLTQEVKECEGIVPVPLEEKLYSTKKRK.

The protein belongs to the bacterial ribosomal protein bS6 family. In terms of assembly, component of the mitochondrial ribosome small subunit (28S) which comprises a 12S rRNA and about 30 distinct proteins.

The protein resides in the mitochondrion. This Bos taurus (Bovine) protein is Small ribosomal subunit protein bS6m (MRPS6).